Consider the following 464-residue polypeptide: Soluble pyridine nucleotide transhydrogenase (464 aa).

35 to 44 (DSRRVVGGNC) contacts FAD.

Belongs to the class-I pyridine nucleotide-disulfide oxidoreductase family. The cofactor is FAD.

It localises to the cytoplasm. It carries out the reaction NAD(+) + NADPH = NADH + NADP(+). Functionally, conversion of NADPH, generated by peripheral catabolic pathways, to NADH, which can enter the respiratory chain for energy generation. The chain is Soluble pyridine nucleotide transhydrogenase from Pseudomonas aeruginosa (strain LESB58).